A 64-amino-acid polypeptide reads, in one-letter code: Large ribosomal subunit protein bL35 (64 aa).

The tract at residues 1-25 (MPKMKTHRGAAKRLKKTGTGKLKRA) is disordered.

It belongs to the bacterial ribosomal protein bL35 family.

This Clostridioides difficile (strain 630) (Peptoclostridium difficile) protein is Large ribosomal subunit protein bL35.